The primary structure comprises 216 residues: Cyclic AMP receptor protein (216 aa).

6 to 126 is an a nucleoside 3',5'-cyclic phosphate binding site; sequence LFHGLAPEEV…HNLAALLARR (121 aa). Residues 75–78 and 85–86 contribute to the 3',5'-cyclic AMP site; these read GEMS and RS. The HTH crp-type domain maps to 140–206; the sequence is EEARNRVAYA…PGTVEVREAA (67 aa). Positions 166-185 form a DNA-binding region, H-T-H motif; it reads HHELAALAGTSRETVSRVLH.

As to quaternary structure, homodimer.

In terms of biological role, activates transcription. Positively regulates six promoters upstream of the TTHB186, TTHB147, TTHB178, TTHB159, TTHA0771 and TTHA0176 genes in a cAMP-dependent manner. Regulated genes include clustered regularly interspaced short palindromic repeat (CRISPR) associated (Cas) genes, and the genes encoding a putative transcriptional regulator, a protein containing the exonuclease III-like domain of DNA polymerase, a GCN5-related acetyltransferase homolog, and some T.thermophilus-specific proteins of unknown function. The consensus DNA-binding site of this transcriptional regulator is 5'-(CT)NNG(G/T)(G/T)C(A/C)N(A/T)NNTCACAN(G/C)(G/C)-3' in which N is G, A, T or C. The protein is Cyclic AMP receptor protein of Thermus thermophilus (strain ATCC 27634 / DSM 579 / HB8).